The following is a 185-amino-acid chain: Ribosome-recycling factor (185 aa).

This sequence belongs to the RRF family.

The protein localises to the cytoplasm. Its function is as follows. Responsible for the release of ribosomes from messenger RNA at the termination of protein biosynthesis. May increase the efficiency of translation by recycling ribosomes from one round of translation to another. This chain is Ribosome-recycling factor, found in Corynebacterium kroppenstedtii (strain DSM 44385 / JCM 11950 / CIP 105744 / CCUG 35717).